The primary structure comprises 302 residues: MIKVIERDGKVRLPFSRGILTRSITSVGVDVDLAYAIATEVQEELIRQGKKVVTKEEIRNITYQKLVEKGFKEEAKRYLFWRRFRKLKIPLIILLGGPTGVGKSTIATELAFRLGIRSVIGTDTIREVMRKIITPELLPTIHTSTFLAWKELRGTVTGSPIIAGFESQVNAVAVGVNAVIQRAIKEGLNAIIEGIHLVPGFIKIDYEMAFMYMIVARSREELEARFYERTRYSKRSAQYYISHLDEIMEIQEYLIKKAREYRVPIIENVELEKTISTIMEDIMEKTVEIMKKKGLDMLEEPK.

Residues 2–89 (IKVIERDGKV…FWRRFRKLKI (88 aa)) form the ATP-cone domain.

This sequence belongs to the 2-phosphoglycerate kinase family. The cofactor is a divalent metal cation.

The enzyme catalyses (2R)-2-phosphoglycerate + ATP = (2R)-2,3-bisphosphoglycerate + ADP + H(+). It participates in thermoadapter biosynthesis; cyclic 2,3-diphosphoglycerate biosynthesis; cyclic 2,3-diphosphoglycerate from 2-phospho-D-glycerate: step 1/2. Catalyzes the phosphorylation of 2-phosphoglycerate to 2,3-diphosphoglycerate. Involved in the biosynthesis of cyclic 2,3-bisphosphoglycerate, a thermoprotectant. In Pyrococcus furiosus (strain ATCC 43587 / DSM 3638 / JCM 8422 / Vc1), this protein is 2-phosphoglycerate kinase.